Reading from the N-terminus, the 117-residue chain is 16 kDa protein (117 aa).

The protein is 16 kDa protein of Tobacco rattle virus (strain PLB).